We begin with the raw amino-acid sequence, 308 residues long: Bifunctional protein FolD (308 aa).

NADP(+) is bound by residues 171–173 (GRS), S198, and I239.

This sequence belongs to the tetrahydrofolate dehydrogenase/cyclohydrolase family. Homodimer.

The enzyme catalyses (6R)-5,10-methylene-5,6,7,8-tetrahydrofolate + NADP(+) = (6R)-5,10-methenyltetrahydrofolate + NADPH. The catalysed reaction is (6R)-5,10-methenyltetrahydrofolate + H2O = (6R)-10-formyltetrahydrofolate + H(+). Its pathway is one-carbon metabolism; tetrahydrofolate interconversion. Its function is as follows. Catalyzes the oxidation of 5,10-methylenetetrahydrofolate to 5,10-methenyltetrahydrofolate and then the hydrolysis of 5,10-methenyltetrahydrofolate to 10-formyltetrahydrofolate. The polypeptide is Bifunctional protein FolD (Borreliella burgdorferi (strain ZS7) (Borrelia burgdorferi)).